The chain runs to 362 residues: Methylthioribose-1-phosphate isomerase (362 aa).

Catalysis depends on Asp252, which acts as the Proton donor.

It belongs to the eIF-2B alpha/beta/delta subunits family. MtnA subfamily.

It localises to the cytoplasm. It is found in the nucleus. It carries out the reaction 5-(methylsulfanyl)-alpha-D-ribose 1-phosphate = 5-(methylsulfanyl)-D-ribulose 1-phosphate. The protein operates within amino-acid biosynthesis; L-methionine biosynthesis via salvage pathway; L-methionine from S-methyl-5-thio-alpha-D-ribose 1-phosphate: step 1/6. Functionally, catalyzes the interconversion of methylthioribose-1-phosphate (MTR-1-P) into methylthioribulose-1-phosphate (MTRu-1-P). The sequence is that of Methylthioribose-1-phosphate isomerase from Drosophila virilis (Fruit fly).